Reading from the N-terminus, the 406-residue chain is Succinylornithine transaminase (406 aa).

Lysine 252 carries the post-translational modification N6-(pyridoxal phosphate)lysine.

The protein belongs to the class-III pyridoxal-phosphate-dependent aminotransferase family. AstC subfamily. Pyridoxal 5'-phosphate is required as a cofactor.

It catalyses the reaction N(2)-succinyl-L-ornithine + 2-oxoglutarate = N-succinyl-L-glutamate 5-semialdehyde + L-glutamate. It functions in the pathway amino-acid degradation; L-arginine degradation via AST pathway; L-glutamate and succinate from L-arginine: step 3/5. Catalyzes the transamination of N(2)-succinylornithine and alpha-ketoglutarate into N(2)-succinylglutamate semialdehyde and glutamate. Can also act as an acetylornithine aminotransferase. This Escherichia coli (strain 55989 / EAEC) protein is Succinylornithine transaminase.